A 388-amino-acid polypeptide reads, in one-letter code: LL-diaminopimelate aminotransferase (388 aa).

Substrate contacts are provided by Tyr-16 and Gly-41. Pyridoxal 5'-phosphate contacts are provided by residues Tyr-70, 104–105 (SK), Tyr-129, Asn-179, Tyr-210, and 239–241 (SLS). Positions 105, 129, and 179 each coordinate substrate. Lys-242 is subject to N6-(pyridoxal phosphate)lysine. Residue Arg-250 participates in pyridoxal 5'-phosphate binding. Arg-368 serves as a coordination point for substrate.

Belongs to the class-I pyridoxal-phosphate-dependent aminotransferase family. LL-diaminopimelate aminotransferase subfamily. In terms of assembly, homodimer. Requires pyridoxal 5'-phosphate as cofactor.

It carries out the reaction (2S,6S)-2,6-diaminopimelate + 2-oxoglutarate = (S)-2,3,4,5-tetrahydrodipicolinate + L-glutamate + H2O + H(+). It participates in amino-acid biosynthesis; L-lysine biosynthesis via DAP pathway; LL-2,6-diaminopimelate from (S)-tetrahydrodipicolinate (aminotransferase route): step 1/1. Its function is as follows. Involved in the synthesis of meso-diaminopimelate (m-DAP or DL-DAP), required for both lysine and peptidoglycan biosynthesis. Catalyzes the direct conversion of tetrahydrodipicolinate to LL-diaminopimelate. This is LL-diaminopimelate aminotransferase from Nitratidesulfovibrio vulgaris (strain ATCC 29579 / DSM 644 / CCUG 34227 / NCIMB 8303 / VKM B-1760 / Hildenborough) (Desulfovibrio vulgaris).